The chain runs to 246 residues: Phycocyanobilin:ferredoxin oxidoreductase (246 aa).

The protein belongs to the HY2 family.

It catalyses the reaction (2R,3Z)-phycocyanobilin + 4 oxidized [2Fe-2S]-[ferredoxin] = biliverdin IXalpha + 4 reduced [2Fe-2S]-[ferredoxin] + 4 H(+). Its function is as follows. Catalyzes the four-electron reduction of biliverdin IX-alpha (2-electron reduction at both the A and D rings); the reaction proceeds via an isolatable 2-electron intermediate, 181,182-dihydrobiliverdin. The polypeptide is Phycocyanobilin:ferredoxin oxidoreductase (Crocosphaera subtropica (strain ATCC 51142 / BH68) (Cyanothece sp. (strain ATCC 51142))).